The chain runs to 628 residues: Serine/threonine-protein phosphatase 2A regulatory subunit psrA (628 aa).

Residues methionine 1 to lysine 22 are compositionally biased toward polar residues. Disordered stretches follow at residues methionine 1 to phenylalanine 61, lysine 500 to serine 558, and serine 577 to threonine 628. Composition is skewed to low complexity over residues asparagine 23–glutamine 58 and glutamine 524–asparagine 547. A compositionally biased stretch (basic and acidic residues) spans asparagine 600–arginine 618.

This sequence belongs to the phosphatase 2A regulatory subunit B56 family. As to quaternary structure, PP2A consists of a trimeric holoenzyme, composed of a 37 kDa catalytic subunit (C subunit) and a 65 kDa constant regulatory subunit (A subunit), that associates with a variety of regulatory subunits (B subunit) such as phr2AB (B55) and psrA (B56 homolog). The trimer may partially dissociates into a core 'AC' dimer equally active compared to the trimer. Seems to play a role in proper anterior patterning (pstO and pstAB).

The protein resides in the cytoplasm. Its subcellular location is the cytosol. Involved in developmental cell fate decision. The chain is Serine/threonine-protein phosphatase 2A regulatory subunit psrA (psrA) from Dictyostelium discoideum (Social amoeba).